A 403-amino-acid chain; its full sequence is 26S proteasome regulatory subunit 6B homolog (403 aa).

M1 is subject to N-acetylmethionine. ATP is bound at residue 191–198 (GPPGTGKT).

It belongs to the AAA ATPase family.

It is found in the cytoplasm. The protein localises to the nucleus. Its function is as follows. The 26S proteasome is involved in the ATP-dependent degradation of ubiquitinated proteins. The regulatory (or ATPase) complex confers ATP dependency and substrate specificity to the 26S complex. The sequence is that of 26S proteasome regulatory subunit 6B homolog (psmC4) from Dictyostelium discoideum (Social amoeba).